A 454-amino-acid polypeptide reads, in one-letter code: Rhizobactin siderophore biosynthesis protein RhbE (454 aa).

An FAD-binding site is contributed by 7-13; it reads AGIGIGP.

This sequence belongs to the lysine N(6)-hydroxylase/L-ornithine N(5)-oxygenase family. The cofactor is FAD.

The protein operates within siderophore biosynthesis; rhizobactin biosynthesis. The polypeptide is Rhizobactin siderophore biosynthesis protein RhbE (rhbE) (Rhizobium meliloti (strain 1021) (Ensifer meliloti)).